The chain runs to 147 residues: Histidine-containing phosphotransfer protein 1 (147 aa).

The region spanning Ala38 to Met133 is the HPt domain. Position 79 is a phosphohistidine (His79).

In terms of processing, two-component system major event consists of a His-to-Asp phosphorelay between a sensor histidine kinase (HK) and a response regulator (RR). In plants, the His-to-Asp phosphorelay involves an additional intermediate named Histidine-containing phosphotransfer protein (HPt). This multistep phosphorelay consists of a His-Asp-His-Asp sequential transfer of a phosphate group between first a His and an Asp of the HK protein, followed by the transfer to a conserved His of the HPt protein and finally the transfer to an Asp in the receiver domain of the RR protein. In terms of tissue distribution, widely expressed.

It localises to the cytoplasm. The protein localises to the cytosol. The protein resides in the nucleus. In terms of biological role, functions as a two-component phosphorelay mediators between cytokinin sensor histidine kinases and response regulators (B-type ARRs). Plays an important role in propagating cytokinin signal transduction through the multistep His-to-Asp phosphorelay. Functions as a positive regulator of the cytokinin signaling pathway. May play a regulatory role in salt and drought tolerance during plant development. The polypeptide is Histidine-containing phosphotransfer protein 1 (Oryza sativa subsp. japonica (Rice)).